A 1070-amino-acid chain; its full sequence is Alpha-glucosidase (1070 aa).

Residues 1 to 35 (MRSIKAASLTPLLAALFTTLSSTLALPSSVWEHQL) form the signal peptide. Asn48, Asn99, Asn144, Asn161, Asn208, Asn384, Asn458, Asn480, and Asn513 each carry an N-linked (GlcNAc...) asparagine glycan. Asp526 serves as the catalytic Nucleophile. The active site involves Glu529. Asn544, Asn566, Asn574, Asn578, and Asn635 each carry an N-linked (GlcNAc...) asparagine glycan. The active-site Proton donor is Asp730. 10 N-linked (GlcNAc...) asparagine glycosylation sites follow: Asn818, Asn885, Asn916, Asn983, Asn992, Asn996, Asn1008, Asn1029, Asn1043, and Asn1052.

The protein belongs to the glycosyl hydrolase 31 family.

It catalyses the reaction Hydrolysis of terminal, non-reducing (1-&gt;4)-linked alpha-D-glucose residues with release of alpha-D-glucose.. Hydrolyzes a broad range of alpha-D-linked glucopyranosides, including maltose (alpha-1,4), sucrose (alpha-1,2), isomaltose (alpha-1,6) and turanose (alpha-1,3). This Candida tsukubaensis (Yeast) protein is Alpha-glucosidase.